A 411-amino-acid polypeptide reads, in one-letter code: Protrudin (411 aa).

Residues 1 to 27 (MQTSEREGSGPELSPSVMPEAPLESPP) are disordered. Residues 1–66 (MQTSEREGSG…AGDGVRYLLR (66 aa)) lie on the Cytoplasmic side of the membrane. The interval 1–92 (MQTSEREGSG…LFLTLNEGAW (92 aa)) is sufficient for homooligomerization. Residues 1-205 (MQTSEREGSG…LYLLPLCWVL (205 aa)) are sufficient for localization to endoplasmic reticulum tubular network and for interactions with REEP1, REEP5, ATL1, ATL2, ATL3 and SPAST. The tract at residues 51-64 (LEPLKDAGDGVRYL) is necessary for interaction with RAB11A and function in neurite outgrowth. A helical transmembrane segment spans residues 67-87 (WQMPLCSLLTCLGLNVLFLTL). Asn-88 is a topological domain (lumenal). A helical membrane pass occupies residues 89–109 (EGAWYSVGALMISVPALLGYL). The Cytoplasmic portion of the chain corresponds to 110–187 (QEVCRARLPE…NPVVSSQFYG (78 aa)). The helical intramembrane region spans 188 to 208 (ALLGTICMLYLLPLCWVLTLL). The Cytoplasmic segment spans residues 209-411 (NSTLFLGNVE…CASCNQTLSK (203 aa)). The tract at residues 234 to 286 (MNPKQEEHAFESPPPPDVGGKGGLMDSTPALTPTEDLTPGSVEEAEEAEPDEE) is disordered. Positions 271–361 (TPGSVEEAEE…GCSATFSVLK (91 aa)) are necessary for interaction with KIF5A. Residues 276–286 (EEAEEAEPDEE) show a composition bias toward acidic residues. The interval 286 to 292 (EFKDAIE) is necessary for interaction with VAPA. Residues 344–410 (TNNFGNCTGC…VCASCNQTLS (67 aa)) form an FYVE-type zinc finger. Zn(2+) contacts are provided by Cys-350, Cys-353, Cys-366, Cys-369, Cys-374, Cys-377, Cys-402, and Cys-405.

Can form homooligomers (monomers, dimers and tetramers). Interacts with RAB11A (GDP-bound form); regulates RAB11A. Interacts with FKBP8; may negatively regulate ZFYVE27 phosphorylation. Interacts with VAPA (via MSP domain); may regulate ZFYVE27 retention in the endoplasmic reticulum and its function in cell projections formation. Interacts with VAPB (via MSP domain). Interacts with RAB11B (GDP-bound form), REEP1, REEP5, ATL1, ATL2, ATL3, SPAST, SURF4, KIF5A, KIF5B, KIF5C and RTN3. Post-translationally, phosphorylated. Phosphorylation is induced by NGF through the MAPK/ERK pathway and modulates interaction with RAB11A.

It localises to the recycling endosome membrane. Its subcellular location is the endoplasmic reticulum membrane. It is found in the cell projection. The protein localises to the growth cone membrane. Functionally, key regulator of RAB11-dependent vesicular trafficking during neurite extension through polarized membrane transport. Promotes axonal elongation and contributes to the establishment of neuronal cell polarity. Involved in nerve growth factor-induced neurite formation in VAPA-dependent manner. Contributes to both the formation and stabilization of the tubular ER network. Involved in ER morphogenesis by regulating the sheet-to-tubule balance and possibly the density of tubule interconnections. Acts as an adapter protein that facilitates the interaction of KIF5A with VAPA, VAPB, SURF4, RAB11A, RAB11B and RTN3 and the ZFYVE27-KIF5A complex contributes to the transport of these proteins in neurons. Can induce formation of neurite-like membrane protrusions in non-neuronal cells in a KIF5A/B-dependent manner. The chain is Protrudin (ZFYVE27) from Pongo abelii (Sumatran orangutan).